The chain runs to 303 residues: MRGILLAGGTGSRLRPVTWAVSKQLMPVYDKPMIYYPLATLVSCGIREILVITTETEAAQFQRLLGDGSQWGLRLEFAVQQRPGGIAEAFLIGEEFLAGGPVALMLGDNLLHGVDFRPCVQRARETAGGHVFGVAVADPSAYGVVEFDAAGRVLSIEEKPVRPRSPYAVPGFYLYDADVVETARSLRPSARGELEITEVNQAYLRRGALSVTLLGRGAVWLDTGTLADCMRAVDYVRAIDEGQGIKIGCVEEAAWRAGFLDTAQLRALAEPLMSSGYGQYLLALTGDGLSRTPQWPALTAAAG.

2 residues coordinate Mg(2+): Asp-108 and Asp-222.

The protein belongs to the glucose-1-phosphate thymidylyltransferase family. It depends on Mg(2+) as a cofactor.

It carries out the reaction dTTP + alpha-D-glucose 1-phosphate + H(+) = dTDP-alpha-D-glucose + diphosphate. Catalyzes the formation of dTDP-glucose, from dTTP and glucose 1-phosphate, as well as its pyrophosphorolysis. Its function is as follows. Probably involved in the biosynthesis of the acarviose moiety of the alpha-glucosidase inhibitor acarbose. The chain is Glucose-1-phosphate thymidylyltransferase (acbA) from Actinoplanes sp. (strain ATCC 31044 / CBS 674.73 / SE50/110).